A 393-amino-acid chain; its full sequence is 8-amino-7-oxononanoate synthase (393 aa).

Gly-108 to Phe-109 provides a ligand contact to pyridoxal 5'-phosphate. His-133 lines the substrate pocket. Pyridoxal 5'-phosphate contacts are provided by residues Ser-182, Asp-207 to His-210, and Thr-238 to Lys-241. The residue at position 241 (Lys-241) is an N6-(pyridoxal phosphate)lysine. Residue Thr-355 participates in substrate binding.

This sequence belongs to the class-II pyridoxal-phosphate-dependent aminotransferase family. BioF subfamily. As to quaternary structure, homodimer. The cofactor is pyridoxal 5'-phosphate.

It carries out the reaction 6-carboxyhexanoyl-[ACP] + L-alanine + H(+) = (8S)-8-amino-7-oxononanoate + holo-[ACP] + CO2. The protein operates within cofactor biosynthesis; biotin biosynthesis. Its function is as follows. Catalyzes the decarboxylative condensation of pimeloyl-[acyl-carrier protein] and L-alanine to produce 8-amino-7-oxononanoate (AON), [acyl-carrier protein], and carbon dioxide. The sequence is that of 8-amino-7-oxononanoate synthase from Petrotoga mobilis (strain DSM 10674 / SJ95).